A 1171-amino-acid polypeptide reads, in one-letter code: ATP-dependent helicase/deoxyribonuclease subunit B (1171 aa).

The region spanning 1-343 (MSLRFVIGRA…LVADENYRYR (343 aa)) is the UvrD-like helicase ATP-binding domain. 8 to 15 (GRAGSGKS) lines the ATP pocket. The 307-residue stretch at 281–587 (MEQPRFHSPA…QFANIPPSLD (307 aa)) folds into the UvrD-like helicase C-terminal domain. [4Fe-4S] cluster contacts are provided by C805, C1129, C1132, and C1138.

The protein belongs to the helicase family. AddB/RexB type 1 subfamily. In terms of assembly, heterodimer of AddA and AddB. Mg(2+) serves as cofactor. It depends on [4Fe-4S] cluster as a cofactor.

Its function is as follows. The heterodimer acts as both an ATP-dependent DNA helicase and an ATP-dependent, dual-direction single-stranded exonuclease. Recognizes the chi site generating a DNA molecule suitable for the initiation of homologous recombination. The AddB subunit has 5' -&gt; 3' nuclease activity but not helicase activity. The protein is ATP-dependent helicase/deoxyribonuclease subunit B of Bacillus cereus (strain AH187).